A 196-amino-acid chain; its full sequence is FKBP-type peptidyl-prolyl cis-trans isomerase SlyD (196 aa).

The interval 1-69 is PPIase first part; the sequence is MKVAKDLVVS…VAVGANDAYG (69 aa). The PPIase FKBP-type domain maps to 1–95; it reads MKVAKDLVVS…GVDELQVGMR (95 aa). An IF-chaperone region spans residues 76 to 120; that stretch reads VQRVPKDVFMGVDELQVGMRFLAETDQGPVPVEITAVEDDHVVVD. Positions 129-151 are PPIase second part; that stretch reads NLKFNVEVVAIREATEEELAHGH. C167, C168, C184, C185, C193, and C195 together coordinate Ni(2+).

It belongs to the FKBP-type PPIase family. Monomer. Binds to a broad range of unrelated Tat signal sequences. Interacts with the hydrogenase nickel incorporation protein HypB.

It localises to the cytoplasm. The catalysed reaction is [protein]-peptidylproline (omega=180) = [protein]-peptidylproline (omega=0). Folding helper with both chaperone and peptidyl-prolyl cis-trans isomerase (PPIase) activities. Chaperone activity prevents aggregation of unfolded or partially folded proteins and promotes their correct folding. PPIases catalyze the cis-trans isomerization of Xaa-Pro bonds of peptides, which accelerates slow steps of protein folding and thus shortens the lifetime of intermediates. Both strategies lower the concentration of intermediates and increase the productivity and yield of the folding reaction. SlyD could be involved in Tat-dependent translocation, by binding to the Tat-type signal of folded proteins. In terms of biological role, also involved in hydrogenase metallocenter assembly, probably by participating in the nickel insertion step. This function in hydrogenase biosynthesis requires chaperone activity and the presence of the metal-binding domain, but not PPIase activity. This is FKBP-type peptidyl-prolyl cis-trans isomerase SlyD (slyD) from Escherichia coli O157:H7.